A 131-amino-acid polypeptide reads, in one-letter code: Small ribosomal subunit protein uS11 (131 aa).

It belongs to the universal ribosomal protein uS11 family. As to quaternary structure, part of the 30S ribosomal subunit. Interacts with proteins S7 and S18. Binds to IF-3.

Functionally, located on the platform of the 30S subunit, it bridges several disparate RNA helices of the 16S rRNA. Forms part of the Shine-Dalgarno cleft in the 70S ribosome. The sequence is that of Small ribosomal subunit protein uS11 from Trichormus variabilis (strain ATCC 29413 / PCC 7937) (Anabaena variabilis).